The sequence spans 185 residues: Protein-lysine palmitoyltransferase CyaC (185 aa).

Active-site residues include H33 and D102.

It belongs to the RTX toxin acyltransferase family. In terms of assembly, homodimer.

The protein resides in the cytoplasm. It carries out the reaction hexadecanoyl-[ACP] + L-lysyl-[protein] = N(6)-hexadecanoyl-L-lysyl-[protein] + holo-[ACP] + H(+). The catalysed reaction is (9Z)-hexadecenoyl-[ACP] + L-lysyl-[protein] = N(6)-[(9Z)-hexadecenoyl]-L-lysyl-[protein] + holo-[ACP] + H(+). In terms of biological role, protein-lysine palmitoyltransferase that catalyzes palmitoylation of the protoxin (CyaA) at two internal lysine residues, thereby converting it to the active toxin. The chain is Protein-lysine palmitoyltransferase CyaC from Bordetella bronchiseptica (strain ATCC BAA-588 / NCTC 13252 / RB50) (Alcaligenes bronchisepticus).